The sequence spans 313 residues: Hydroxyphenylpyruvate reductase (313 aa).

NADP(+) contacts are provided by residues 152–155, 174–176, and Ile-230; these read LGRI and SRS. Arg-232 is an active-site residue. Asp-256 serves as a coordination point for NADP(+). The active site involves Glu-261. His-279 serves as the catalytic Proton donor.

It belongs to the D-isomer specific 2-hydroxyacid dehydrogenase family.

The catalysed reaction is (2R)-2-hydroxy-3-(4-hydroxyphenyl)propanoate + NAD(+) = 3-(4-hydroxyphenyl)pyruvate + NADH + H(+). It carries out the reaction (2R)-2-hydroxy-3-(4-hydroxyphenyl)propanoate + NADP(+) = 3-(4-hydroxyphenyl)pyruvate + NADPH + H(+). The enzyme catalyses (2R)-3-(3,4-dihydroxyphenyl)lactate + NADP(+) = 3-(3,4-dihydroxyphenyl)pyruvate + NADPH + H(+). It catalyses the reaction (2R)-3-(3,4-dihydroxyphenyl)lactate + NAD(+) = 3-(3,4-dihydroxyphenyl)pyruvate + NADH + H(+). Functionally, catalyzes the NAD(P)H-dependent reduction of 4-hydroxyphenylpyruvate to 4-hydroxyphenyllactate and 3,4-dihydroxyphenylpyruvate to 3,4-dihydroxyphenyllactate in the biosynthesis of rosmarinic acid. Rosmarinic acid is an ester of caffeic acid and 3,4-dihydroxyphenyllactic acid. NADP is the preferred substrate. This chain is Hydroxyphenylpyruvate reductase (HPPR), found in Plectranthus scutellarioides (Coleus).